The sequence spans 314 residues: tRNA-cytidine(32) 2-sulfurtransferase (314 aa).

The short motif at 39-44 (SGGKDS) is the PP-loop motif element. Cys114, Cys117, and Cys205 together coordinate [4Fe-4S] cluster.

It belongs to the TtcA family. Homodimer. Mg(2+) serves as cofactor. The cofactor is [4Fe-4S] cluster.

The protein resides in the cytoplasm. It carries out the reaction cytidine(32) in tRNA + S-sulfanyl-L-cysteinyl-[cysteine desulfurase] + AH2 + ATP = 2-thiocytidine(32) in tRNA + L-cysteinyl-[cysteine desulfurase] + A + AMP + diphosphate + H(+). Its pathway is tRNA modification. Its function is as follows. Catalyzes the ATP-dependent 2-thiolation of cytidine in position 32 of tRNA, to form 2-thiocytidine (s(2)C32). The sulfur atoms are provided by the cysteine/cysteine desulfurase (IscS) system. This Cupriavidus necator (strain ATCC 17699 / DSM 428 / KCTC 22496 / NCIMB 10442 / H16 / Stanier 337) (Ralstonia eutropha) protein is tRNA-cytidine(32) 2-sulfurtransferase.